Consider the following 130-residue polypeptide: Odontogenesis associated phosphoprotein (130 aa).

A signal peptide spans 1-23; sequence MARRHCFSYWLLVCWLVVTVAEG.

As to expression, highly expressed in placenta.

It is found in the secreted. May promote nucleation of hydroxyapatite. This is Odontogenesis associated phosphoprotein from Homo sapiens (Human).